Consider the following 418-residue polypeptide: Dwarfin sma-2 (418 aa).

Residues 8–134 (KKITERLKWK…YKRVHATGVL (127 aa)) form the MH1 domain. Residues cysteine 62, cysteine 107, cysteine 119, and histidine 124 each contribute to the Zn(2+) site. The region spanning 222-418 (WATVSYYELN…PTPRPISSIS (197 aa)) is the MH2 domain.

This sequence belongs to the dwarfin/SMAD family.

Its subcellular location is the cytoplasm. The protein resides in the nucleus. Involved in TGF-beta pathway. Plays a role in male tail tip morphogenesis. The protein is Dwarfin sma-2 of Caenorhabditis elegans.